We begin with the raw amino-acid sequence, 112 residues long: Peptidyl-tRNA hydrolase (112 aa).

The tract at residues 64-99 (EEAKRAGLPTGLISDAGRTQLEPGTPTALAIGPAPD) is disordered.

This sequence belongs to the PTH2 family.

It is found in the cytoplasm. The catalysed reaction is an N-acyl-L-alpha-aminoacyl-tRNA + H2O = an N-acyl-L-amino acid + a tRNA + H(+). Its function is as follows. The natural substrate for this enzyme may be peptidyl-tRNAs which drop off the ribosome during protein synthesis. This chain is Peptidyl-tRNA hydrolase, found in Halobacterium salinarum (strain ATCC 29341 / DSM 671 / R1).